A 78-amino-acid polypeptide reads, in one-letter code: Large ribosomal subunit protein bL28 (78 aa).

Residues 1–20 (MSRVCQVTGKRPVTGNNRSH) form a disordered region.

Belongs to the bacterial ribosomal protein bL28 family.

The sequence is that of Large ribosomal subunit protein bL28 from Vibrio campbellii (strain ATCC BAA-1116).